Consider the following 454-residue polypeptide: Membrane-bound lytic murein transglycosylase F (454 aa).

A signal peptide spans 1–24; the sequence is MRRPLRRVTVVLLWVALAIGVAWF. The segment at 25–265 is non-LT domain; that stretch reads YDYRRSMQSL…IYNRYYTAVD (241 aa). Residues 266–454 form an LT domain region; sequence TFDYVDVKKF…YDILKQKKAV (189 aa). The active site involves Glu311.

In the N-terminal section; belongs to the bacterial solute-binding protein 3 family. The protein in the C-terminal section; belongs to the transglycosylase Slt family.

The protein resides in the cell outer membrane. The enzyme catalyses Exolytic cleavage of the (1-&gt;4)-beta-glycosidic linkage between N-acetylmuramic acid (MurNAc) and N-acetylglucosamine (GlcNAc) residues in peptidoglycan, from either the reducing or the non-reducing ends of the peptidoglycan chains, with concomitant formation of a 1,6-anhydrobond in the MurNAc residue.. Murein-degrading enzyme that degrades murein glycan strands and insoluble, high-molecular weight murein sacculi, with the concomitant formation of a 1,6-anhydromuramoyl product. Lytic transglycosylases (LTs) play an integral role in the metabolism of the peptidoglycan (PG) sacculus. Their lytic action creates space within the PG sacculus to allow for its expansion as well as for the insertion of various structures such as secretion systems and flagella. The protein is Membrane-bound lytic murein transglycosylase F of Desulfosudis oleivorans (strain DSM 6200 / JCM 39069 / Hxd3) (Desulfococcus oleovorans).